The following is a 119-amino-acid chain: Protein yippee-like 3 (119 aa).

The 98-residue stretch at 19–116 folds into the Yippee domain; the sequence is RRYSCVHCRA…IELSHMIKDN (98 aa). Residues Cys-23, Cys-26, Cys-79, and Cys-82 each coordinate Zn(2+).

Belongs to the yippee family.

The protein resides in the nucleus. It localises to the nucleolus. Functionally, may be involved in proliferation and apoptosis in myeloid precursor cells. This chain is Protein yippee-like 3 (ypel3), found in Oryzias latipes (Japanese rice fish).